The chain runs to 843 residues: MDKVRIHEIASELGLKSKDVLQKAQEMGLKVKSPSSGVSFEEAEKLTDYIINGPAEAVAAKPQEKPKKSAPKKEEKPKEEVKKEAEEKVAASKKEEEKPQEKKSVEESLTPPSLKKRRGLVIVKKKRPKVEPKVEEKEAKQETPQVTAEEETPLTLKRKPKKAKKSTPPAKKNEGKKIEILEDRDLSDVSMELEEEVVVLPDFSEELQKVEEEQKPKEPQKKNKQVKVARKSFAIEQQGISRSKKKKRKKKESKSETEIKVVELPEEVRVYEFAEKIGKSVGEVIKVLFNLGMMATKNDFLDKETLEILAEEFDVEIKIKNVLEELDYVKVYDAVEDDYLEERPPVITIMGHVDHGKTSLLDYIRNSKIAEREAGGITQHIGAYMIEKDGKRITFIDTPGHEAFTEMRARGAQATDIAIIVVAADDGVKPQTVEAVNHAKTADVPMIVAINKIDKPEANPDLVKSQLAEIGITPTEWGGEYEFVEVSAKTGQGVDDLLDTILLQAEIMELKANPKREAKAVVIESSLEKGRGPVATVIVKNGTLRVGDHVVCGVAFGRVRAIIDDLGKMIKERKPSEPGVVVGLDKVPPAGEILVAVKDAEEARMYAERRAEYERQKELSKTTKVSLEELSQLVKEGQLKKLPVIIKADTQGSLEAIKGSLEKLKNEEVKVDIIHAGVGAISESDVTLADASENAVILGFNVRPTGAVKEKAKQLGVNIKTYSIIYDLIDDVKALLSGMLSPIIKEEVIGQAEVRETFNVPKIGTVAGCLVTDGVIERNAKARVIRDGVVIYDSKISSLKRFKEDVREVTKGYECGLMIENFNDIKVGDVIEAYKEVEEAATL.

2 disordered regions span residues 55–185 (AEAV…EDRD) and 209–228 (KVEE…QVKV). Residues 62–106 (PQEKPKKSAPKKEEKPKEEVKKEAEEKVAASKKEEEKPQEKKSVE) show a composition bias toward basic and acidic residues. A compositionally biased stretch (basic residues) spans 114-128 (LKKRRGLVIVKKKRP). Residues 129–141 (KVEPKVEEKEAKQ) are compositionally biased toward basic and acidic residues. Residues 156-165 (LKRKPKKAKK) show a composition bias toward basic residues. Composition is skewed to basic and acidic residues over residues 171–185 (KKNE…EDRD) and 209–221 (KVEE…EPQK). One can recognise a tr-type G domain in the interval 342–511 (ERPPVITIMG…LLQAEIMELK (170 aa)). Residues 351–358 (GHVDHGKT) are G1. 351-358 (GHVDHGKT) contributes to the GTP binding site. Residues 376-380 (GITQH) are G2. A G3 region spans residues 397-400 (DTPG). GTP contacts are provided by residues 397 to 401 (DTPGH) and 451 to 454 (NKID). The G4 stretch occupies residues 451–454 (NKID). A G5 region spans residues 487–489 (SAK).

Belongs to the TRAFAC class translation factor GTPase superfamily. Classic translation factor GTPase family. IF-2 subfamily.

The protein resides in the cytoplasm. One of the essential components for the initiation of protein synthesis. Protects formylmethionyl-tRNA from spontaneous hydrolysis and promotes its binding to the 30S ribosomal subunits. Also involved in the hydrolysis of GTP during the formation of the 70S ribosomal complex. The protein is Translation initiation factor IF-2 of Nitratiruptor sp. (strain SB155-2).